The chain runs to 442 residues: 3-dehydroquinate synthase, chloroplastic (442 aa).

The transit peptide at Met1–Ser61 directs the protein to the chloroplast. NAD(+) contacts are provided by residues Asn119, Asp150–Glu152, Lys155, Gly183–Asp188, Thr208–Thr209, Lys221, Lys230, and Thr248–Thr251. Glu263 is a binding site for a divalent metal cation. Lys305 is a binding site for NAD(+). Positions 326 and 343 each coordinate a divalent metal cation.

Belongs to the sugar phosphate cyclases superfamily. Dehydroquinate synthase family. As to quaternary structure, homodimer. The cofactor is a divalent metal cation. It depends on NAD(+) as a cofactor. As to expression, highly expressed in roots. Lower expression in stems, flowers and cotyledons. Barely detected in leaves.

The protein localises to the plastid. The protein resides in the chloroplast. The enzyme catalyses 7-phospho-2-dehydro-3-deoxy-D-arabino-heptonate = 3-dehydroquinate + phosphate. It functions in the pathway metabolic intermediate biosynthesis; chorismate biosynthesis; chorismate from D-erythrose 4-phosphate and phosphoenolpyruvate: step 2/7. In terms of biological role, catalyzes the second step in the shikimate pathway. The chain is 3-dehydroquinate synthase, chloroplastic (DHQS) from Solanum lycopersicum (Tomato).